The chain runs to 96 residues: HssA/B-like protein 25 (96 aa).

It belongs to the hssA/B family.

This is HssA/B-like protein 25 (hssl25) from Dictyostelium discoideum (Social amoeba).